The chain runs to 1231 residues: Pesticidal crystal protein Cry1Bd (1231 aa).

Belongs to the delta endotoxin family.

Functionally, promotes colloidosmotic lysis by binding to the midgut epithelial cells of lepidopteran larvae. Toxic to Plutella xylostella. The polypeptide is Pesticidal crystal protein Cry1Bd (cry1Bd) (Bacillus thuringiensis subsp. wuhanensis).